We begin with the raw amino-acid sequence, 158 residues long: 2-C-methyl-D-erythritol 2,4-cyclodiphosphate synthase (158 aa).

A divalent metal cation-binding residues include D9 and H11. Residues 9–11 (DVH) and 35–36 (HS) each bind 4-CDP-2-C-methyl-D-erythritol 2-phosphate. H43 contacts a divalent metal cation. 4-CDP-2-C-methyl-D-erythritol 2-phosphate is bound by residues 57–59 (DIG), 62–66 (FPDTD), 133–136 (TTTE), F140, and R143.

The protein belongs to the IspF family. Homotrimer. Requires a divalent metal cation as cofactor.

The enzyme catalyses 4-CDP-2-C-methyl-D-erythritol 2-phosphate = 2-C-methyl-D-erythritol 2,4-cyclic diphosphate + CMP. It functions in the pathway isoprenoid biosynthesis; isopentenyl diphosphate biosynthesis via DXP pathway; isopentenyl diphosphate from 1-deoxy-D-xylulose 5-phosphate: step 4/6. Its function is as follows. Involved in the biosynthesis of isopentenyl diphosphate (IPP) and dimethylallyl diphosphate (DMAPP), two major building blocks of isoprenoid compounds. Catalyzes the conversion of 4-diphosphocytidyl-2-C-methyl-D-erythritol 2-phosphate (CDP-ME2P) to 2-C-methyl-D-erythritol 2,4-cyclodiphosphate (ME-CPP) with a corresponding release of cytidine 5-monophosphate (CMP). This chain is 2-C-methyl-D-erythritol 2,4-cyclodiphosphate synthase, found in Actinobacillus pleuropneumoniae serotype 7 (strain AP76).